A 212-amino-acid polypeptide reads, in one-letter code: Thymidylate kinase (212 aa).

ATP is bound at residue 10–17 (GLEGAGKT).

This sequence belongs to the thymidylate kinase family.

The enzyme catalyses dTMP + ATP = dTDP + ADP. In terms of biological role, phosphorylation of dTMP to form dTDP in both de novo and salvage pathways of dTTP synthesis. This is Thymidylate kinase from Yersinia pseudotuberculosis serotype O:1b (strain IP 31758).